We begin with the raw amino-acid sequence, 370 residues long: Mitogen-activated protein kinase 3 (370 aa).

The Protein kinase domain occupies 32–319 (YVPIKPIGRG…VTEALEHPYM (288 aa)). ATP-binding positions include 38-46 (IGRGAYGIV) and Lys61. Catalysis depends on Asp158, which acts as the Proton acceptor. Position 191 is a phosphothreonine (Thr191). The TXY signature appears at 191–193 (TEY). Residue Tyr193 is modified to Phosphotyrosine.

The protein belongs to the protein kinase superfamily. CMGC Ser/Thr protein kinase family. MAP kinase subfamily. Post-translationally, dually phosphorylated on Thr-191 and Tyr-193, which activates the enzyme.

It carries out the reaction L-seryl-[protein] + ATP = O-phospho-L-seryl-[protein] + ADP + H(+). The catalysed reaction is L-threonyl-[protein] + ATP = O-phospho-L-threonyl-[protein] + ADP + H(+). Activated by threonine and tyrosine phosphorylation. The sequence is that of Mitogen-activated protein kinase 3 (MPK3) from Oryza sativa subsp. japonica (Rice).